Consider the following 278-residue polypeptide: Large ribosomal subunit protein uL2 (278 aa).

Residues 214–278 (WLGKRPHNRG…IMRSRHQRKS (65 aa)) form a disordered region.

Belongs to the universal ribosomal protein uL2 family. In terms of assembly, part of the 50S ribosomal subunit. Forms a bridge to the 30S subunit in the 70S ribosome.

One of the primary rRNA binding proteins. Required for association of the 30S and 50S subunits to form the 70S ribosome, for tRNA binding and peptide bond formation. It has been suggested to have peptidyltransferase activity; this is somewhat controversial. Makes several contacts with the 16S rRNA in the 70S ribosome. The protein is Large ribosomal subunit protein uL2 of Chelativorans sp. (strain BNC1).